A 129-amino-acid chain; its full sequence is Lysozyme C (129 aa).

One can recognise a C-type lysozyme domain in the interval 1 to 129; it reads KIYTRCELAA…VSKWIKDCKL (129 aa). Disulfide bonds link Cys-6/Cys-127, Cys-30/Cys-115, Cys-64/Cys-80, and Cys-76/Cys-94. Catalysis depends on residues Glu-35 and Asp-52.

This sequence belongs to the glycosyl hydrolase 22 family. Monomer.

Its subcellular location is the secreted. It catalyses the reaction Hydrolysis of (1-&gt;4)-beta-linkages between N-acetylmuramic acid and N-acetyl-D-glucosamine residues in a peptidoglycan and between N-acetyl-D-glucosamine residues in chitodextrins.. Lysozymes have primarily a bacteriolytic function; those in tissues and body fluids are associated with the monocyte-macrophage system and enhance the activity of immunoagents. This is Lysozyme C (LYZ) from Crax fasciolata (Bare-faced curassow).